Consider the following 473-residue polypeptide: Adenosylhomocysteinase (473 aa).

Substrate contacts are provided by T60, D135, and E197. An NAD(+)-binding site is contributed by 198–200; that stretch reads TTT. Positions 227 and 231 each coordinate substrate. NAD(+) contacts are provided by residues N232, 261–266, E284, N319, 340–342, and N385; these read GFGDVG and IGH.

It belongs to the adenosylhomocysteinase family. NAD(+) is required as a cofactor.

Its subcellular location is the cytoplasm. It carries out the reaction S-adenosyl-L-homocysteine + H2O = L-homocysteine + adenosine. Its pathway is amino-acid biosynthesis; L-homocysteine biosynthesis; L-homocysteine from S-adenosyl-L-homocysteine: step 1/1. Functionally, may play a key role in the regulation of the intracellular concentration of adenosylhomocysteine. This chain is Adenosylhomocysteinase, found in Bradyrhizobium diazoefficiens (strain JCM 10833 / BCRC 13528 / IAM 13628 / NBRC 14792 / USDA 110).